An 88-amino-acid chain; its full sequence is uncharacterized protein (88 aa).

Residues 1–22 (MLKASILFITISLTLMLENSYG) form the signal peptide. Disulfide bonds link Cys59/Cys73, Cys66/Cys77, and Cys72/Cys82.

Its subcellular location is the secreted. This is an uncharacterized protein from Schistosoma japonicum (Blood fluke).